Consider the following 525-residue polypeptide: Bifunctional purine biosynthesis protein PurH (525 aa).

The region spanning 10-156 is the MGS-like domain; it reads HRIPIRRALV…KNHPSVAIVT (147 aa).

It belongs to the PurH family.

The enzyme catalyses (6R)-10-formyltetrahydrofolate + 5-amino-1-(5-phospho-beta-D-ribosyl)imidazole-4-carboxamide = 5-formamido-1-(5-phospho-D-ribosyl)imidazole-4-carboxamide + (6S)-5,6,7,8-tetrahydrofolate. It catalyses the reaction IMP + H2O = 5-formamido-1-(5-phospho-D-ribosyl)imidazole-4-carboxamide. It participates in purine metabolism; IMP biosynthesis via de novo pathway; 5-formamido-1-(5-phospho-D-ribosyl)imidazole-4-carboxamide from 5-amino-1-(5-phospho-D-ribosyl)imidazole-4-carboxamide (10-formyl THF route): step 1/1. The protein operates within purine metabolism; IMP biosynthesis via de novo pathway; IMP from 5-formamido-1-(5-phospho-D-ribosyl)imidazole-4-carboxamide: step 1/1. The protein is Bifunctional purine biosynthesis protein PurH of Nocardioides sp. (strain ATCC BAA-499 / JS614).